A 118-amino-acid chain; its full sequence is Telomere bouquet protein 2 (118 aa).

In terms of assembly, interacts with bqt1. The bqt1-bqt2-sad1 complex binds rap1.

It is found in the cytoplasm. The protein resides in the nucleus. It localises to the cytoskeleton. The protein localises to the microtubule organizing center. Its subcellular location is the spindle pole body. It is found in the chromosome. The protein resides in the telomere. In terms of biological role, involved in chromosome segregation. During meiotic prophase, connects telomeres to the spindle pole body by forming a bridge between the telomere protein rap1 and the spindle pole body protein sad1. The protein is Telomere bouquet protein 2 (bqt2) of Schizosaccharomyces pombe (strain 972 / ATCC 24843) (Fission yeast).